A 188-amino-acid polypeptide reads, in one-letter code: Methylated-DNA--protein-cysteine methyltransferase (188 aa).

DNA contacts are provided by Tyr-120, Gly-121, and Arg-134. Residue Cys-151 is the Nucleophile; methyl group acceptor of the active site. Ser-157 contributes to the DNA binding site.

The protein belongs to the MGMT family.

Its subcellular location is the nucleus. The catalysed reaction is a 6-O-methyl-2'-deoxyguanosine in DNA + L-cysteinyl-[protein] = S-methyl-L-cysteinyl-[protein] + a 2'-deoxyguanosine in DNA. It catalyses the reaction a 4-O-methyl-thymidine in DNA + L-cysteinyl-[protein] = a thymidine in DNA + S-methyl-L-cysteinyl-[protein]. Functionally, involved in the cellular defense against the biological effects of O6-methylguanine (O6-MeG) and O4-methylthymine (O4-MeT) in DNA. Repairs the methylated nucleobase in DNA by stoichiometrically transferring the methyl group to a cysteine residue in the enzyme. This is a suicide reaction: the enzyme is irreversibly inactivated. Prefers double-stranded DNA over single-stranded DNA as substrate. This is Methylated-DNA--protein-cysteine methyltransferase (MGT1) from Saccharomyces cerevisiae (strain ATCC 204508 / S288c) (Baker's yeast).